Here is a 131-residue protein sequence, read N- to C-terminus: Glycine cleavage system H protein (131 aa).

The region spanning 24-106 is the Lipoyl-binding domain; it reads RVTVGISDHA…YGEGWIFVVE (83 aa). Lys65 carries the post-translational modification N6-lipoyllysine.

This sequence belongs to the GcvH family. As to quaternary structure, the glycine cleavage system is composed of four proteins: P, T, L and H. (R)-lipoate is required as a cofactor.

In terms of biological role, the glycine cleavage system catalyzes the degradation of glycine. The H protein shuttles the methylamine group of glycine from the P protein to the T protein. This is Glycine cleavage system H protein from Xanthomonas oryzae pv. oryzae (strain MAFF 311018).